The following is a 180-amino-acid chain: Acireductone dioxygenase (180 aa).

The Fe(2+) site is built by histidine 97, histidine 99, glutamate 103, and histidine 141. Ni(2+)-binding residues include histidine 97, histidine 99, glutamate 103, and histidine 141.

Belongs to the acireductone dioxygenase (ARD) family. As to quaternary structure, monomer. Fe(2+) is required as a cofactor. Requires Mg(2+) as cofactor. Ni(2+) serves as cofactor. The cofactor is Mn(2+). It depends on Co(2+) as a cofactor.

The catalysed reaction is 1,2-dihydroxy-5-(methylsulfanyl)pent-1-en-3-one + O2 = 3-(methylsulfanyl)propanoate + CO + formate + 2 H(+). The enzyme catalyses 1,2-dihydroxy-5-(methylsulfanyl)pent-1-en-3-one + O2 = 4-methylsulfanyl-2-oxobutanoate + formate + 2 H(+). It participates in amino-acid biosynthesis; L-methionine biosynthesis via salvage pathway; L-methionine from S-methyl-5-thio-alpha-D-ribose 1-phosphate: step 5/6. In terms of biological role, catalyzes 2 different reactions between oxygen and the acireductone 1,2-dihydroxy-3-keto-5-methylthiopentene (DHK-MTPene) depending upon the metal bound in the active site. Fe-containing acireductone dioxygenase (Fe-ARD) produces formate and 2-keto-4-methylthiobutyrate (KMTB), the alpha-ketoacid precursor of methionine in the methionine recycle pathway. Ni-containing acireductone dioxygenase (Ni-ARD) produces methylthiopropionate, carbon monoxide and formate, and does not lie on the methionine recycle pathway. The sequence is that of Acireductone dioxygenase (mtnD) from Klebsiella oxytoca.